We begin with the raw amino-acid sequence, 88 residues long: Class I hydrophobin F (88 aa).

Positions 1–21 (MLSRLFTVPAILLATLGSAAT) are cleaved as a signal peptide. 4 disulfide bridges follow: cysteine 30–cysteine 67, cysteine 34–cysteine 58, cysteine 35–cysteine 51, and cysteine 68–cysteine 84.

Belongs to the fungal hydrophobin family.

Its subcellular location is the secreted. It localises to the cell wall. It is found in the vacuole. The protein resides in the cytoplasmic vesicle. Aerial growth, conidiation, and dispersal of filamentous fungi in the environment rely upon a capability of their secreting small amphipathic proteins called hydrophobins (HPBs) with low sequence identity. Class I can self-assemble into an outermost layer of rodlet bundles on aerial cell surfaces, conferring cellular hydrophobicity that supports fungal growth, development and dispersal; whereas Class II form highly ordered films at water-air interfaces through intermolecular interactions but contribute nothing to the rodlet structure. Hyd1F contributes to certain cell wall-related features, such as hydrophobicity but is not involved in cell wall-related events during fungal proliferation in host hemocoel. Does not contribute to conidial hydrophobicity. In Beauveria bassiana (strain ARSEF 2860) (White muscardine disease fungus), this protein is Class I hydrophobin F.